The following is a 555-amino-acid chain: Membrane protein insertase YidC (555 aa).

5 helical membrane-spanning segments follow: residues 7–24 (VLWV…DNWQ), 367–387 (WGWS…PLSA), 437–457 (LPVV…LASV), 476–496 (PFFI…SLNP), and 511–531 (PIAF…YYVV).

It belongs to the OXA1/ALB3/YidC family. Type 1 subfamily. As to quaternary structure, interacts with the Sec translocase complex via SecD. Specifically interacts with transmembrane segments of nascent integral membrane proteins during membrane integration.

It localises to the cell inner membrane. Required for the insertion and/or proper folding and/or complex formation of integral membrane proteins into the membrane. Involved in integration of membrane proteins that insert both dependently and independently of the Sec translocase complex, as well as at least some lipoproteins. Aids folding of multispanning membrane proteins. The sequence is that of Membrane protein insertase YidC from Burkholderia lata (strain ATCC 17760 / DSM 23089 / LMG 22485 / NCIMB 9086 / R18194 / 383).